The sequence spans 351 residues: UDP-N-acetylglucosamine--N-acetylmuramyl-(pentapeptide) pyrophosphoryl-undecaprenol N-acetylglucosamine transferase (351 aa).

UDP-N-acetyl-alpha-D-glucosamine contacts are provided by residues 13-15 (TGG), asparagine 125, arginine 161, serine 189, isoleucine 241, 260-265 (ALTVCE), and glutamine 285.

This sequence belongs to the glycosyltransferase 28 family. MurG subfamily.

It is found in the cell inner membrane. The enzyme catalyses di-trans,octa-cis-undecaprenyl diphospho-N-acetyl-alpha-D-muramoyl-L-alanyl-D-glutamyl-meso-2,6-diaminopimeloyl-D-alanyl-D-alanine + UDP-N-acetyl-alpha-D-glucosamine = di-trans,octa-cis-undecaprenyl diphospho-[N-acetyl-alpha-D-glucosaminyl-(1-&gt;4)]-N-acetyl-alpha-D-muramoyl-L-alanyl-D-glutamyl-meso-2,6-diaminopimeloyl-D-alanyl-D-alanine + UDP + H(+). Its pathway is cell wall biogenesis; peptidoglycan biosynthesis. Its function is as follows. Cell wall formation. Catalyzes the transfer of a GlcNAc subunit on undecaprenyl-pyrophosphoryl-MurNAc-pentapeptide (lipid intermediate I) to form undecaprenyl-pyrophosphoryl-MurNAc-(pentapeptide)GlcNAc (lipid intermediate II). This Haemophilus influenzae (strain ATCC 51907 / DSM 11121 / KW20 / Rd) protein is UDP-N-acetylglucosamine--N-acetylmuramyl-(pentapeptide) pyrophosphoryl-undecaprenol N-acetylglucosamine transferase.